The primary structure comprises 318 residues: Glycine--tRNA ligase alpha subunit (318 aa).

Residues 298-318 (EAGGSSPSTSRQGEAPRGESQ) are disordered. Residues 300 to 309 (GGSSPSTSRQ) show a composition bias toward polar residues.

Belongs to the class-II aminoacyl-tRNA synthetase family. In terms of assembly, tetramer of two alpha and two beta subunits.

It localises to the cytoplasm. It carries out the reaction tRNA(Gly) + glycine + ATP = glycyl-tRNA(Gly) + AMP + diphosphate. The polypeptide is Glycine--tRNA ligase alpha subunit (Rhodopseudomonas palustris (strain BisB18)).